The following is a 120-amino-acid chain: MAASIPSDLRNLRACLLCSLIKSVDAFQTDGCENCDEVLHLKGDEEKVYDCTSANYDGMIAAMSNDDSWVCKWQKMQRRVKGIYAISVSGSLPSNVVSDLKSMGVRYKANQRDYSIQAKK.

The interval Met-1 to Leu-39 is interaction with spt-5. Residues Cys-15–Cys-35 form a C4-type zinc finger.

It belongs to the SPT4 family. In terms of assembly, interacts with spt-5 to form DSIF. DSIF interacts with RNA polymerase II and with the positive transcription elongation factor b complex (P-TEFb complex), which is composed of cdk-9 and cyclin-T.

It localises to the nucleus. Its function is as follows. May function as a component of the DRB sensitivity-inducing factor complex (DSIF complex), which regulates transcription elongation by RNA polymerase II. DSIF may enhance transcriptional pausing at sites proximal to the promoter, which may in turn facilitate the assembly of an elongation competent RNA polymerase II complex. The sequence is that of Transcription elongation factor SPT4 (spt-4) from Caenorhabditis briggsae.